The primary structure comprises 642 residues: Threonine--tRNA ligase (642 aa).

The TGS domain maps to 1–61; the sequence is MPIITLPDGS…EEDASLEIIT (61 aa). The catalytic stretch occupies residues 244–535; the sequence is DHRKIGKQLD…LIEEYAGFFP (292 aa). Residues C335, H386, and H512 each contribute to the Zn(2+) site.

The protein belongs to the class-II aminoacyl-tRNA synthetase family. In terms of assembly, homodimer. Zn(2+) serves as cofactor.

It is found in the cytoplasm. It catalyses the reaction tRNA(Thr) + L-threonine + ATP = L-threonyl-tRNA(Thr) + AMP + diphosphate + H(+). Its function is as follows. Catalyzes the attachment of threonine to tRNA(Thr) in a two-step reaction: L-threonine is first activated by ATP to form Thr-AMP and then transferred to the acceptor end of tRNA(Thr). Also edits incorrectly charged L-seryl-tRNA(Thr). The chain is Threonine--tRNA ligase from Vibrio vulnificus (strain CMCP6).